The primary structure comprises 279 residues: MLPLLRCVPRALGAAATGLRASIPAPPLRHLLQPAPRPCLRPFGLLSVRAGSARRSGLLQPPVPCACGCGALHTEGDKAFVEFLTDEIKEEKKIQKHKSLPKMSGDWELEVNGTEAKLLRKVAGEKITVTFNINNSIPPTFDGEEEPSQGQKAEEQEPELTSTPNFVVEVTKTDGKKTLVLDCHYPEDEIGHEDEAESDIFSIKEVSFQTTGDSEWRDTNYTLNTDSLDWALYDHLMDFLADRGVDNTFADELVELSTALEHQEYITFLEDLKSFVKSQ.

The transit peptide at 1 to 71 (MLPLLRCVPR…PVPCACGCGA (71 aa)) directs the protein to the mitochondrion. Residues 74 to 91 (TEGDKAFVEFLTDEIKEE) are C1q binding. K89 and K92 each carry N6-acetyllysine. The interval 134-162 (NNSIPPTFDGEEEPSQGQKAEEQEPELTS) is disordered. Residues 166-210 (FVVEVTKTDGKKTLVLDCHYPEDEIGHEDEAESDIFSIKEVSFQT) form an interaction with MAVS region. Y185 is subject to Phosphotyrosine. Residues S198 and S202 each carry the phosphoserine modification. Position 211 is a phosphothreonine (T211).

It belongs to the MAM33 family. In terms of assembly, homotrimer; three monomers form a donut-shaped structure with an unusually asymmetric charge distribution on the surface. Interacts with CDK13, HRK, VTN, NFYB, ADRA1B, FOXC1, DDX21, DDX50, NCL, SRSF1 and SRSF9. Interacts with CD93; the association may represent a cell surface C1q receptor. Interacts with KRT1; the association represents a cell surface kininogen receptor. Interacts with CD209; the interaction is indicative for a C1q:C1QBP:CD209 signaling complex. Interacts with FBL and RRP1; the respective interactions with C1QBP are competitive. Probably associates with the mitoribosome. Interacts with MAVS; the interaction occurs upon viral transfection. Interacts with PPIF. Interacts with U2AF1L4. Interacts with PLEKHN1. Interacts with VGF-derived peptide TLQP-21. Interacts with MRE11 and RAD50; forming the MRC (MRE11-RAD50-C1QBP) complex that inhibits the activity of MRE11. As to expression, ubiquitous.

It is found in the mitochondrion matrix. It localises to the nucleus. The protein localises to the cell membrane. Its subcellular location is the secreted. The protein resides in the cytoplasm. It is found in the nucleolus. Its function is as follows. Multifunctional and multicompartmental protein involved in inflammation and infection processes, ribosome biogenesis, protein synthesis in mitochondria, regulation of apoptosis, transcriptional regulation and pre-mRNA splicing. At the cell surface is thought to act as an endothelial receptor for plasma proteins of the complement and kallikrein-kinin cascades. Putative receptor for C1q; specifically binds to the globular 'heads' of C1q thus inhibiting C1; may perform the receptor function through a complex with C1qR/CD93. In complex with cytokeratin-1/KRT1 is a high affinity receptor for kininogen-1/HMWK. Can also bind other plasma proteins, such as coagulation factor XII leading to its autoactivation. May function to bind initially fluid kininogen-1 to the cell membrane. The secreted form may enhance both extrinsic and intrinsic coagulation pathways. It is postulated that the cell surface form requires docking with transmembrane proteins for downstream signaling which might be specific for a cell-type or response. By acting as C1q receptor is involved in chemotaxis of immature dendritic cells and neutrophils and is proposed to signal through CD209/DC-SIGN on immature dendritic cells, through integrin alpha-4/beta-1 during trophoblast invasion of the decidua, and through integrin beta-1 during endothelial cell adhesion and spreading. Signaling involved in inhibition of innate immune response is implicating the PI3K-AKT/PKB pathway. Required for protein synthesis in mitochondria. In mitochondrial translation may be involved in formation of functional 55S mitoribosomes; the function seems to involve its RNA-binding activity. Acts as a RNA modification reader, which specifically recognizes and binds mitochondrial RNAs modified by C5-methylcytosine (m5C) in response to stress, and promotes recruitment of the mitochondrial degradosome complex, leading to their degradation. May be involved in the nucleolar ribosome maturation process; the function may involve the exchange of FBL for RRP1 in the association with pre-ribosome particles. Involved in regulation of RNA splicing by inhibiting the RNA-binding capacity of SRSF1 and its phosphorylation. Is required for the nuclear translocation of splicing factor U2AF1L4. Involved in regulation of CDKN2A- and HRK-mediated apoptosis. Stabilizes mitochondrial CDKN2A isoform smARF. May be involved in regulation of FOXC1 transcriptional activity and NFY/CCAAT-binding factor complex-mediated transcription. May play a role in antibacterial defense as it can bind to cell surface hyaluronan and inhibit Streptococcus pneumoniae hyaluronate lyase. May be involved in modulation of the immune response; ligation by HCV core protein is resulting in suppression of interleukin-12 production in monocyte-derived dendritic cells. Involved in regulation of antiviral response by inhibiting RIGI- and IFIH1-mediated signaling pathways probably involving its association with MAVS after viral infection. Acts as a regulator of DNA repair via homologous recombination by inhibiting the activity of MRE11: interacts with unphosphorylated MRE11 and RAD50 in absence of DNA damage, preventing formation and activity of the MRN complex. Following DNA damage, dissociates from phosphorylated MRE11, allowing formation of the MRN complex. This chain is Complement component 1 Q subcomponent-binding protein, mitochondrial (C1qbp), found in Rattus norvegicus (Rat).